The chain runs to 286 residues: uncharacterized protein (286 aa).

Residues Ala-4 to Asn-18 and Thr-95 each bind NAD(+). The active site involves Lys-171. Lys-239 is a binding site for NAD(+).

It belongs to the HIBADH-related family.

This is an uncharacterized protein from Bacillus subtilis (strain 168).